The following is a 431-amino-acid chain: Glutamate--tRNA ligase 1 (431 aa).

Residues 11 to 21 (PSPTGDLHLGG) carry the 'HIGH' region motif. Positions 203–207 (KLSKR) match the 'KMSKS' region motif. Lysine 206 contributes to the ATP binding site.

This sequence belongs to the class-I aminoacyl-tRNA synthetase family. Glutamate--tRNA ligase type 1 subfamily. In terms of assembly, monomer.

The protein resides in the cytoplasm. It carries out the reaction tRNA(Glu) + L-glutamate + ATP = L-glutamyl-tRNA(Glu) + AMP + diphosphate. Catalyzes the attachment of glutamate to tRNA(Glu) in a two-step reaction: glutamate is first activated by ATP to form Glu-AMP and then transferred to the acceptor end of tRNA(Glu). The protein is Glutamate--tRNA ligase 1 of Rubrobacter xylanophilus (strain DSM 9941 / JCM 11954 / NBRC 16129 / PRD-1).